Here is a 349-residue protein sequence, read N- to C-terminus: tRNA-specific 2-thiouridylase MnmA (349 aa).

ATP contacts are provided by residues 7–14 (GLSGGVDS) and leucine 33. Cysteine 94 serves as the catalytic Nucleophile. Cysteines 94 and 193 form a disulfide. Position 119 (glycine 119) interacts with ATP. The segment at 143-145 (KDQ) is interaction with tRNA. Cysteine 193 serves as the catalytic Cysteine persulfide intermediate. The tract at residues 298–299 (RY) is interaction with tRNA.

It belongs to the MnmA/TRMU family.

The protein localises to the cytoplasm. It carries out the reaction S-sulfanyl-L-cysteinyl-[protein] + uridine(34) in tRNA + AH2 + ATP = 2-thiouridine(34) in tRNA + L-cysteinyl-[protein] + A + AMP + diphosphate + H(+). In terms of biological role, catalyzes the 2-thiolation of uridine at the wobble position (U34) of tRNA, leading to the formation of s(2)U34. The sequence is that of tRNA-specific 2-thiouridylase MnmA from Rippkaea orientalis (strain PCC 8801 / RF-1) (Cyanothece sp. (strain PCC 8801)).